The sequence spans 570 residues: Proline--tRNA ligase (570 aa).

The protein belongs to the class-II aminoacyl-tRNA synthetase family. ProS type 1 subfamily. In terms of assembly, homodimer.

The protein localises to the cytoplasm. It carries out the reaction tRNA(Pro) + L-proline + ATP = L-prolyl-tRNA(Pro) + AMP + diphosphate. In terms of biological role, catalyzes the attachment of proline to tRNA(Pro) in a two-step reaction: proline is first activated by ATP to form Pro-AMP and then transferred to the acceptor end of tRNA(Pro). As ProRS can inadvertently accommodate and process non-cognate amino acids such as alanine and cysteine, to avoid such errors it has two additional distinct editing activities against alanine. One activity is designated as 'pretransfer' editing and involves the tRNA(Pro)-independent hydrolysis of activated Ala-AMP. The other activity is designated 'posttransfer' editing and involves deacylation of mischarged Ala-tRNA(Pro). The misacylated Cys-tRNA(Pro) is not edited by ProRS. This is Proline--tRNA ligase from Neisseria meningitidis serogroup C / serotype 2a (strain ATCC 700532 / DSM 15464 / FAM18).